A 142-amino-acid polypeptide reads, in one-letter code: Nucleoside diphosphate kinase (142 aa).

Positions 11, 59, 87, 93, 104, and 114 each coordinate ATP. The active-site Pros-phosphohistidine intermediate is the His-117.

This sequence belongs to the NDK family. Homotetramer. Mg(2+) is required as a cofactor.

It is found in the cytoplasm. It catalyses the reaction a 2'-deoxyribonucleoside 5'-diphosphate + ATP = a 2'-deoxyribonucleoside 5'-triphosphate + ADP. The catalysed reaction is a ribonucleoside 5'-diphosphate + ATP = a ribonucleoside 5'-triphosphate + ADP. Major role in the synthesis of nucleoside triphosphates other than ATP. The ATP gamma phosphate is transferred to the NDP beta phosphate via a ping-pong mechanism, using a phosphorylated active-site intermediate. This chain is Nucleoside diphosphate kinase, found in Aeromonas salmonicida (strain A449).